Consider the following 445-residue polypeptide: Mannan endo-1,4-beta-mannosidase 2 (445 aa).

The signal sequence occupies residues 1 to 27; it reads MAVGNGLILYHILGLASCIALVYFSLG. Trp110 contacts substrate. N-linked (GlcNAc...) asparagine glycosylation is present at Asn181. Residue Asn226 participates in substrate binding. Catalysis depends on Glu227, which acts as the Proton donor. Tyr309 is a substrate binding site. Residue Glu349 is the Nucleophile of the active site. Position 391 (Trp391) interacts with substrate.

Belongs to the glycosyl hydrolase 5 (cellulase A) family. In terms of tissue distribution, expressed in stems and seeds, and at lower levels in roots and leaves.

The protein resides in the secreted. It carries out the reaction Random hydrolysis of (1-&gt;4)-beta-D-mannosidic linkages in mannans, galactomannans and glucomannans.. In Oryza sativa subsp. japonica (Rice), this protein is Mannan endo-1,4-beta-mannosidase 2 (MAN2).